The primary structure comprises 160 residues: SsrA-binding protein (160 aa).

Residues lysine 133–glutamine 160 are disordered. The segment covering aspartate 137–arginine 149 has biased composition (basic and acidic residues).

The protein belongs to the SmpB family.

Its subcellular location is the cytoplasm. Required for rescue of stalled ribosomes mediated by trans-translation. Binds to transfer-messenger RNA (tmRNA), required for stable association of tmRNA with ribosomes. tmRNA and SmpB together mimic tRNA shape, replacing the anticodon stem-loop with SmpB. tmRNA is encoded by the ssrA gene; the 2 termini fold to resemble tRNA(Ala) and it encodes a 'tag peptide', a short internal open reading frame. During trans-translation Ala-aminoacylated tmRNA acts like a tRNA, entering the A-site of stalled ribosomes, displacing the stalled mRNA. The ribosome then switches to translate the ORF on the tmRNA; the nascent peptide is terminated with the 'tag peptide' encoded by the tmRNA and targeted for degradation. The ribosome is freed to recommence translation, which seems to be the essential function of trans-translation. This Agrobacterium fabrum (strain C58 / ATCC 33970) (Agrobacterium tumefaciens (strain C58)) protein is SsrA-binding protein.